The chain runs to 196 residues: uncharacterized protein (196 aa).

In terms of domain architecture, HTH tetR-type spans 7–67 (RNTKEKILTA…AVIDNHVKIW (61 aa)). Residues 30-49 (SINDILDETATGKGQFYYYF) constitute a DNA-binding region (H-T-H motif).

This is an uncharacterized protein from Lactococcus lactis subsp. lactis (Streptococcus lactis).